A 757-amino-acid chain; its full sequence is Endonuclease MutS2 (757 aa).

Residue 321 to 328 participates in ATP binding; the sequence is GPNMGGKT. The Smr domain occupies 681 to 756; the sequence is IDIRGMTVEE…GTGVTVVEVK (76 aa).

It belongs to the DNA mismatch repair MutS family. MutS2 subfamily. As to quaternary structure, homodimer. Binds to stalled ribosomes, contacting rRNA.

Endonuclease that is involved in the suppression of homologous recombination and thus may have a key role in the control of bacterial genetic diversity. Functionally, acts as a ribosome collision sensor, splitting the ribosome into its 2 subunits. Detects stalled/collided 70S ribosomes which it binds and splits by an ATP-hydrolysis driven conformational change. Acts upstream of the ribosome quality control system (RQC), a ribosome-associated complex that mediates the extraction of incompletely synthesized nascent chains from stalled ribosomes and their subsequent degradation. Probably generates substrates for RQC. In Thermotoga sp. (strain RQ2), this protein is Endonuclease MutS2.